The following is a 492-amino-acid chain: Probable serine/threonine-protein kinase WNK9 (492 aa).

The Protein kinase domain maps to Gly25–Leu282. ATP contacts are provided by residues Thr105–Phe108 and Lys155. Asp172 functions as the Proton acceptor in the catalytic mechanism.

This sequence belongs to the protein kinase superfamily. Ser/Thr protein kinase family. WNK subfamily.

The catalysed reaction is L-seryl-[protein] + ATP = O-phospho-L-seryl-[protein] + ADP + H(+). It carries out the reaction L-threonyl-[protein] + ATP = O-phospho-L-threonyl-[protein] + ADP + H(+). May regulate flowering time by modulating the photoperiod pathway. This chain is Probable serine/threonine-protein kinase WNK9 (WNK9), found in Arabidopsis thaliana (Mouse-ear cress).